The chain runs to 614 residues: Kelch-like protein 40 (614 aa).

The 68-residue stretch at 33-100 (IDCVLKIQGK…IYTSEIEITE (68 aa)) folds into the BTB domain. A BACK domain is found at 135–237 (CLAIFRLGLL…PQDYIKNKVE (103 aa)). Kelch repeat units follow at residues 353–405 (QLFV…ESDN), 406–455 (SIYL…SHDN), 456–503 (LVYV…VHKG), 505–550 (ILIA…SMNG), and 552–606 (LYAI…AARL).

Belongs to the KLHL40 family. Component of the BCR(KLHL40) E3 ubiquitin ligase complex.

It localises to the cytoplasm. Its subcellular location is the myofibril. The protein resides in the sarcomere. It is found in the a band. The protein localises to the i band. Its function is as follows. Substrate-specific adapter of a BCR (BTB-CUL3-RBX1) E3 ubiquitin ligase complex that acts as a key regulator of skeletal muscle development. This Xenopus tropicalis (Western clawed frog) protein is Kelch-like protein 40 (klhl40).